Consider the following 424-residue polypeptide: MNLLIQGGRVIDPSQGIDEVLDILVENGAVKELGKGVKAPSGTETIDASGLIVTPGLIDMHVHLRDPGHEYKEDIVSGTKAAAAGGFTSVACMPNTKPVNDNKAVTSYIIAKAKAEGSVNVFPVGSITQGSKGELLSEMGELKESGCVAVSDDGHPVTNSELMRRALEYAKGMGIMVISHAEDLSLVGAGVMNEGFVSTELGLKGIPWAAEDAATARDVYLAEFTDSPLHIAHVSTKGSLRIIRNAKARGVKVTCETAPHYFSLTDDAVRGYDTNAKMNPPLRTADDVTAVKEALKDGTIDAIATDHAPHHIDEKDLEFNEALNGIVGLETSLTLSLRLVEEGVLTLPVLVDKMACNPAKILGIDRGTLKPGSVADITVIDPKATWTVDADKLASKSKNSPFLGWEVKGAAAFTIVGGKVVYKR.

Positions 61 and 63 each coordinate Zn(2+). Substrate contacts are provided by residues 63–65 (HLR) and asparagine 95. Aspartate 153, histidine 180, and histidine 233 together coordinate Zn(2+). Asparagine 279 serves as a coordination point for substrate. Aspartate 306 contacts Zn(2+). The active site involves aspartate 306. Histidine 310 is a binding site for substrate.

It belongs to the metallo-dependent hydrolases superfamily. DHOase family. Class I DHOase subfamily. Zn(2+) is required as a cofactor.

The catalysed reaction is (S)-dihydroorotate + H2O = N-carbamoyl-L-aspartate + H(+). The protein operates within pyrimidine metabolism; UMP biosynthesis via de novo pathway; (S)-dihydroorotate from bicarbonate: step 3/3. Catalyzes the reversible cyclization of carbamoyl aspartate to dihydroorotate. This chain is Dihydroorotase, found in Geobacter metallireducens (strain ATCC 53774 / DSM 7210 / GS-15).